A 182-amino-acid chain; its full sequence is Large ribosomal subunit protein uL6 (182 aa).

Belongs to the universal ribosomal protein uL6 family. As to quaternary structure, part of the 50S ribosomal subunit.

In terms of biological role, this protein binds to the 23S rRNA, and is important in its secondary structure. It is located near the subunit interface in the base of the L7/L12 stalk, and near the tRNA binding site of the peptidyltransferase center. This is Large ribosomal subunit protein uL6 from Carboxydothermus hydrogenoformans (strain ATCC BAA-161 / DSM 6008 / Z-2901).